The chain runs to 303 residues: N-acetyl-D-glucosamine kinase (303 aa).

ATP contacts are provided by residues 4–11 and 133–140; these read GFDIGGTK and GVGGGLVL. Histidine 157, cysteine 177, cysteine 179, and cysteine 184 together coordinate Zn(2+).

The protein belongs to the ROK (NagC/XylR) family. NagK subfamily.

The catalysed reaction is N-acetyl-D-glucosamine + ATP = N-acetyl-D-glucosamine 6-phosphate + ADP + H(+). Its pathway is cell wall biogenesis; peptidoglycan recycling. Its function is as follows. Catalyzes the phosphorylation of N-acetyl-D-glucosamine (GlcNAc) derived from cell-wall degradation, yielding GlcNAc-6-P. The sequence is that of N-acetyl-D-glucosamine kinase from Salmonella gallinarum (strain 287/91 / NCTC 13346).